Consider the following 99-residue polypeptide: NADH-quinone oxidoreductase subunit K (99 aa).

The next 3 helical transmembrane spans lie at 3 to 23 (PANY…GVLV), 28 to 48 (IVVF…LVTF), and 59 to 79 (VMAF…LAII).

Belongs to the complex I subunit 4L family. As to quaternary structure, NDH-1 is composed of 14 different subunits. Subunits NuoA, H, J, K, L, M, N constitute the membrane sector of the complex.

It localises to the cell membrane. It catalyses the reaction a quinone + NADH + 5 H(+)(in) = a quinol + NAD(+) + 4 H(+)(out). In terms of biological role, NDH-1 shuttles electrons from NADH, via FMN and iron-sulfur (Fe-S) centers, to quinones in the respiratory chain. The immediate electron acceptor for the enzyme in this species is believed to be a menaquinone. Couples the redox reaction to proton translocation (for every two electrons transferred, four hydrogen ions are translocated across the cytoplasmic membrane), and thus conserves the redox energy in a proton gradient. The sequence is that of NADH-quinone oxidoreductase subunit K from Frankia alni (strain DSM 45986 / CECT 9034 / ACN14a).